The sequence spans 52 residues: Large ribosomal subunit protein eL39 (52 aa).

This sequence belongs to the eukaryotic ribosomal protein eL39 family. In terms of assembly, interacts with YIH1.

This is Large ribosomal subunit protein eL39 (RPL39) from Encephalitozoon cuniculi (strain GB-M1) (Microsporidian parasite).